Reading from the N-terminus, the 573-residue chain is MLO-like protein 11 (573 aa).

Over Met-1–Ala-19 the chain is Extracellular. The chain crosses the membrane as a helical span at residues Leu-20 to Val-40. The Cytoplasmic portion of the chain corresponds to Glu-41–Glu-69. The helical transmembrane segment at Leu-70–Ile-90 threads the bilayer. The Extracellular portion of the chain corresponds to Cys-91–Arg-163. A helical transmembrane segment spans residues Phe-164 to Ile-184. The Cytoplasmic segment spans residues Val-185–Arg-287. 2 helical membrane-spanning segments follow: residues Ile-288 to Lys-308 and Gly-309 to Ala-329. Over Lys-330–Ser-371 the chain is Cytoplasmic. A helical membrane pass occupies residues Leu-372 to Trp-392. Topologically, residues Gln-393–Leu-411 are extracellular. Residues Leu-412–Val-432 form a helical membrane-spanning segment. Over Thr-433 to Val-573 the chain is Cytoplasmic. The segment at Gln-446–Leu-467 is calmodulin-binding. 2 disordered regions span residues Glu-500 to Arg-532 and Arg-554 to Val-573. Residues Glu-507–Gln-516 are compositionally biased toward low complexity. The span at Leu-561–Val-573 shows a compositional bias: polar residues.

Belongs to the MLO family.

The protein localises to the membrane. In terms of biological role, may be involved in modulation of pathogen defense and leaf cell death. Activity seems to be regulated by Ca(2+)-dependent calmodulin binding and seems not to require heterotrimeric G proteins. The chain is MLO-like protein 11 (MLO11) from Arabidopsis thaliana (Mouse-ear cress).